Consider the following 365-residue polypeptide: tRNA 2-selenouridine synthase (365 aa).

In terms of domain architecture, Rhodanese spans 15 to 138 (LVSDHPIMDA…MRQFLIETID (124 aa)). The active-site S-selanylcysteine intermediate is cysteine 98.

It belongs to the SelU family. As to quaternary structure, monomer.

The enzyme catalyses 5-methylaminomethyl-2-thiouridine(34) in tRNA + selenophosphate + (2E)-geranyl diphosphate + H2O + H(+) = 5-methylaminomethyl-2-selenouridine(34) in tRNA + (2E)-thiogeraniol + phosphate + diphosphate. The catalysed reaction is 5-methylaminomethyl-2-thiouridine(34) in tRNA + (2E)-geranyl diphosphate = 5-methylaminomethyl-S-(2E)-geranyl-thiouridine(34) in tRNA + diphosphate. It carries out the reaction 5-methylaminomethyl-S-(2E)-geranyl-thiouridine(34) in tRNA + selenophosphate + H(+) = 5-methylaminomethyl-2-(Se-phospho)selenouridine(34) in tRNA + (2E)-thiogeraniol. It catalyses the reaction 5-methylaminomethyl-2-(Se-phospho)selenouridine(34) in tRNA + H2O = 5-methylaminomethyl-2-selenouridine(34) in tRNA + phosphate. Involved in the post-transcriptional modification of the uridine at the wobble position (U34) of tRNA(Lys), tRNA(Glu) and tRNA(Gln). Catalyzes the conversion of 2-thiouridine (S2U-RNA) to 2-selenouridine (Se2U-RNA). Acts in a two-step process involving geranylation of 2-thiouridine (S2U) to S-geranyl-2-thiouridine (geS2U) and subsequent selenation of the latter derivative to 2-selenouridine (Se2U) in the tRNA chain. The chain is tRNA 2-selenouridine synthase from Shewanella piezotolerans (strain WP3 / JCM 13877).